The chain runs to 138 residues: Translation initiation factor 5A (138 aa).

K42 bears the Hypusine mark.

Belongs to the eIF-5A family.

Its subcellular location is the cytoplasm. Functionally, functions by promoting the formation of the first peptide bond. This Pyrobaculum aerophilum (strain ATCC 51768 / DSM 7523 / JCM 9630 / CIP 104966 / NBRC 100827 / IM2) protein is Translation initiation factor 5A (eif5a).